A 224-amino-acid polypeptide reads, in one-letter code: Ribonuclease T (224 aa).

In terms of domain architecture, Exonuclease spans 20–195; that stretch reads VVIDVETAGF…YDTQKTAELF (176 aa). Mg(2+) is bound by residues aspartate 23, glutamate 25, histidine 182, and aspartate 187. The active-site Proton donor/acceptor is histidine 182.

The protein belongs to the RNase T family. Homodimer. It depends on Mg(2+) as a cofactor.

Trims short 3' overhangs of a variety of RNA species, leaving a one or two nucleotide 3' overhang. Responsible for the end-turnover of tRNA: specifically removes the terminal AMP residue from uncharged tRNA (tRNA-C-C-A). Also appears to be involved in tRNA biosynthesis. The polypeptide is Ribonuclease T (Vibrio cholerae serotype O1 (strain ATCC 39315 / El Tor Inaba N16961)).